The following is a 723-amino-acid chain: Probable C-mannosyltransferase DPY19L4 (723 aa).

Residues 1–33 (MAEEEGPPVELRQRKKPKSSENKESAKEEKISD) are disordered. Ala2 bears the N-acetylalanine mark. A compositionally biased stretch (basic and acidic residues) spans 18–32 (KSSENKESAKEEKIS). The next 12 helical transmembrane spans lie at 52-72 (IFIG…YLSA), 161-178 (VYFY…YVTA), 184-202 (WLMS…WFVI), 222-240 (LPYF…KSNL), 260-280 (MMMW…LFLL), 292-310 (YEVY…LLQF), 316-337 (LVSP…QLNV), 349-370 (VINF…KMFV), 421-441 (LLPF…QVIF), 466-486 (IIYH…IEGL), 489-509 (IWIP…ELWM), and 522-542 (PILL…LSLW).

Belongs to the dpy-19 family. Widely expressed.

The protein resides in the membrane. Probable C-mannosyltransferase that mediates C-mannosylation of tryptophan residues on target proteins. The sequence is that of Probable C-mannosyltransferase DPY19L4 (DPY19L4) from Homo sapiens (Human).